We begin with the raw amino-acid sequence, 100 residues long: Ribosomal biogenesis factor (100 aa).

Phosphoserine is present on serine 19. N6-acetyllysine is present on lysine 21. Phosphoserine is present on serine 69.

As to quaternary structure, associates with the pre-60S ribosomal particles.

The protein resides in the nucleus. The protein localises to the nucleolus. Trans-acting factor in ribosome biogenesis required for efficient 40S and 60S subunit production. In Bos taurus (Bovine), this protein is Ribosomal biogenesis factor (RBIS).